Consider the following 375-residue polypeptide: Phosphoglucan phosphatase DSP4, amyloplastic (375 aa).

The N-terminal 42 residues, 1–42 (MFCVQNLPRSSALPLQSFKSHQRRPPCSVNTLGVMSNVNLHR), are a transit peptide targeting the amyloplast. A disordered region spans residues 49-71 (ISGPTSSAETSDANVEEEKSETY). Over residues 51 to 61 (GPTSSAETSDA) the composition is skewed to polar residues. A Tyrosine-protein phosphatase domain is found at 92–249 (NYNFIRPDLI…AADILTGLRK (158 aa)). Catalysis depends on Cys193, which acts as the Phosphocysteine intermediate. 194-199 (TAGLGR) is a binding site for substrate. The interval 254–330 (LTWKNPDCTT…NKDGHVNNFV (77 aa)) is polysaccharide binding.

In terms of tissue distribution, expressed in phloem parenchyma of 16-24 week old seedlings and 2 year old trees (at protein level). Expressed in leaves of 16-24 week old seedlings and 2 year old trees.

It is found in the plastid. It localises to the amyloplast. The protein resides in the nucleus. In terms of biological role, starch granule-associated phosphoglucan phosphatase involved in the control of starch accumulation. Acts as a major regulator of the initial steps of starch degradation at the granule surface. Functions during the day by dephosphorylating the night-accumulated phospho-oligosaccharides. Can release phosphate from both the C6 and the C3 positions. In Castanea sativa (Sweet chestnut), this protein is Phosphoglucan phosphatase DSP4, amyloplastic.